The chain runs to 337 residues: Putative 2-aminoethylphosphonate-binding periplasmic protein (337 aa).

The signal sequence occupies residues 1–21 (MKLSRLALLSVFALASAPSWA).

It belongs to the bacterial solute-binding protein 1 family.

The protein resides in the periplasm. In terms of biological role, probably part of the PhnSTUV complex (TC 3.A.1.11.5) involved in 2-aminoethylphosphonate import. The chain is Putative 2-aminoethylphosphonate-binding periplasmic protein (phnS) from Salmonella paratyphi A (strain ATCC 9150 / SARB42).